Consider the following 313-residue polypeptide: Glyoxylate/hydroxypyruvate reductase A (313 aa).

Arginine 228 is an active-site residue. Histidine 276 serves as the catalytic Proton donor.

It belongs to the D-isomer specific 2-hydroxyacid dehydrogenase family. GhrA subfamily.

The protein localises to the cytoplasm. The catalysed reaction is glycolate + NADP(+) = glyoxylate + NADPH + H(+). It carries out the reaction (R)-glycerate + NAD(+) = 3-hydroxypyruvate + NADH + H(+). The enzyme catalyses (R)-glycerate + NADP(+) = 3-hydroxypyruvate + NADPH + H(+). Its function is as follows. Catalyzes the NADPH-dependent reduction of glyoxylate and hydroxypyruvate into glycolate and glycerate, respectively. This Photorhabdus laumondii subsp. laumondii (strain DSM 15139 / CIP 105565 / TT01) (Photorhabdus luminescens subsp. laumondii) protein is Glyoxylate/hydroxypyruvate reductase A.